Consider the following 21-residue polypeptide: M-lycotoxin-Ls4a (21 aa).

Leucine amide is present on L21.

As to expression, expressed by the venom gland.

It is found in the secreted. May inhibit growth of bacteria. This Lycosa singoriensis (Wolf spider) protein is M-lycotoxin-Ls4a.